The sequence spans 373 residues: 3-isopropylmalate dehydrogenase (373 aa).

An NAD(+)-binding site is contributed by 82-93 (GPKWGTGAVRPE). Substrate-binding residues include Arg-100, Arg-110, Arg-139, and Asp-231. Residues Asp-231 and Asp-260 each coordinate Mg(2+). 295 to 306 (GSAPDLPENKVN) lines the NAD(+) pocket.

Belongs to the isocitrate and isopropylmalate dehydrogenases family. In terms of assembly, homodimer. Mg(2+) serves as cofactor. Requires Mn(2+) as cofactor.

The protein localises to the cytoplasm. It carries out the reaction (2R,3S)-3-isopropylmalate + NAD(+) = 4-methyl-2-oxopentanoate + CO2 + NADH. The protein operates within amino-acid biosynthesis; L-leucine biosynthesis; L-leucine from 3-methyl-2-oxobutanoate: step 3/4. Its function is as follows. Catalyzes the oxidation of 3-carboxy-2-hydroxy-4-methylpentanoate (3-isopropylmalate) to 3-carboxy-4-methyl-2-oxopentanoate. The product decarboxylates to 4-methyl-2 oxopentanoate. The protein is 3-isopropylmalate dehydrogenase (LEU2) of Scheffersomyces stipitis (strain ATCC 58785 / CBS 6054 / NBRC 10063 / NRRL Y-11545) (Yeast).